The primary structure comprises 614 residues: Inactive leucine-rich repeat receptor-like serine/threonine-protein kinase At5g24100 (614 aa).

An N-terminal signal peptide occupies residues 1-21; the sequence is MSRGRSFIFYFVLFLFFGSSA. Residues 22 to 251 lie on the Extracellular side of the membrane; it reads LYSQVTGDLA…KNGIYISEPA (230 aa). The N-linked (GlcNAc...) asparagine glycan is linked to asparagine 53. LRR repeat units follow at residues 71–95, 96–120, 121–146, 148–167, 168–190, and 191–214; these read GTRV…TISR, LSEL…FLQL, KKLK…TWTN, TVLD…GFAN, LTGL…DLNL, and PGLR…LKRF. 3 N-linked (GlcNAc...) asparagine glycosylation sites follow: asparagine 146, asparagine 158, and asparagine 167. 2 N-linked (GlcNAc...) asparagine glycosylation sites follow: asparagine 197 and asparagine 202. Residues 252–272 traverse the membrane as a helical segment; sequence ILGIAISVCFVIFFVIAVVII. The Cytoplasmic segment spans residues 273–614; sequence VCYVKRQRKS…VETLEEIERD (342 aa). A Protein kinase domain is found at 341–611; the sequence is IASAEFLGKG…VKVVETLEEI (271 aa). Serine 343 carries the post-translational modification Phosphoserine. ATP-binding positions include 347–355 and lysine 369; that span reads LGKGVFGMT. Serine 420 is modified (phosphoserine). Phosphothreonine occurs at positions 441, 514, and 591. The stretch at 578–601 is one LRR 7 repeat; sequence AKLLQMLQLGTSCTAMVPAKRPDM.

It belongs to the protein kinase superfamily. Ser/Thr protein kinase family.

The protein resides in the cell membrane. This is Inactive leucine-rich repeat receptor-like serine/threonine-protein kinase At5g24100 from Arabidopsis thaliana (Mouse-ear cress).